The following is a 458-amino-acid chain: Cysteine--tRNA ligase (458 aa).

Position 29 (cysteine 29) interacts with Zn(2+). The 'HIGH' region motif lies at 31-41; sequence MTVYDLCHLGH. Positions 213, 238, and 242 each coordinate Zn(2+). The 'KMSKS' region signature appears at 270–274; the sequence is KMSKS. Lysine 273 lines the ATP pocket.

It belongs to the class-I aminoacyl-tRNA synthetase family. In terms of assembly, monomer. It depends on Zn(2+) as a cofactor.

The protein resides in the cytoplasm. The enzyme catalyses tRNA(Cys) + L-cysteine + ATP = L-cysteinyl-tRNA(Cys) + AMP + diphosphate. The chain is Cysteine--tRNA ligase from Acidovorax ebreus (strain TPSY) (Diaphorobacter sp. (strain TPSY)).